Here is a 443-residue protein sequence, read N- to C-terminus: Crh-like protein 2 (443 aa).

A signal peptide spans 1–20 (MVRIGSSLLLATLAATTVSA). The GH16 domain maps to 21–306 (ASDPPKCSQD…TVECYDPPSG (286 aa)). The cysteines at positions 56 and 67 are disulfide-linked. Glu164 (nucleophile) is an active-site residue. The active-site Proton donor is Glu168. Position 168 (Glu168) interacts with chitin. N-linked (GlcNAc...) asparagine glycosylation is found at Asn194 and Asn237. Positions 257 and 268 each coordinate chitin. Residues Asn332 and Asn359 are each glycosylated (N-linked (GlcNAc...) asparagine). Low complexity-rich tracts occupy residues 350-367 (ASSS…SANT) and 378-410 (EPGN…SETS). The segment at 350–420 (ASSSASGSAN…ASSNKNAAPS (71 aa)) is disordered. The span at 411-420 (ASSNKNAAPS) shows a compositional bias: polar residues. Asn416 carries the GPI-like-anchor amidated asparagine lipid modification. The propeptide at 417-443 (AAPSQNERVLNGSFFAVLVAVVALVTL) is removed in mature form. The N-linked (GlcNAc...) asparagine glycan is linked to Asn427.

The protein belongs to the glycosyl hydrolase 16 family. CRH1 subfamily. In terms of processing, the GPI-like anchor contains a phosphoceramide lipid group. The anchor position has not been determined.

The protein resides in the cell membrane. Its subcellular location is the secreted. The protein localises to the cell wall. The catalysed reaction is Random endo-hydrolysis of N-acetyl-beta-D-glucosaminide (1-&gt;4)-beta-linkages in chitin and chitodextrins.. Functionally, dual chitinase/transglycosylase that plays a role in cell wall architecture. Chitinase and transglycosylase activities are coupled. Required for the polysaccharide cross-linking at the septa and the cell wall. More specifically, transfers chitin to 1,6-beta-glucan in the cell wall. The sequence is that of Crh-like protein 2 from Aspergillus fumigatus (strain ATCC MYA-4609 / CBS 101355 / FGSC A1100 / Af293) (Neosartorya fumigata).